The primary structure comprises 834 residues: Periplasmic nitrate reductase (834 aa).

Residues 1–32 (MTEPKIDRRQLLKLEAAAIAAAAAGMPTVARA) constitute a signal peptide (tat-type signal). A 4Fe-4S Mo/W bis-MGD-type domain is found at 44-100 (LKWDKAACRFCGTGCSVMVATKDNRVVATHGDIKAEVNRGLNCVKGYFLSKIMYGHD). [4Fe-4S] cluster-binding residues include C51, C54, C58, and C86. Mo-bis(molybdopterin guanine dinucleotide) is bound by residues K88, Q155, N180, C184, 217–224 (WGSNMAEM), 248–252 (STFEH), 267–269 (QTD), M378, Q382, N488, 514–515 (SD), K537, D564, and 724–733 (TGRVVEHWHS). W800 is a binding site for substrate. N808 and K825 together coordinate Mo-bis(molybdopterin guanine dinucleotide).

Belongs to the prokaryotic molybdopterin-containing oxidoreductase family. NasA/NapA/NarB subfamily. In terms of assembly, component of the periplasmic nitrate reductase NapAB complex composed of NapA and NapB. Requires [4Fe-4S] cluster as cofactor. Mo-bis(molybdopterin guanine dinucleotide) is required as a cofactor. Predicted to be exported by the Tat system. The position of the signal peptide cleavage has not been experimentally proven.

It is found in the periplasm. The catalysed reaction is 2 Fe(II)-[cytochrome] + nitrate + 2 H(+) = 2 Fe(III)-[cytochrome] + nitrite + H2O. Functionally, catalytic subunit of the periplasmic nitrate reductase complex NapAB. Receives electrons from NapB and catalyzes the reduction of nitrate to nitrite. The chain is Periplasmic nitrate reductase from Bradyrhizobium sp. (strain ORS 278).